Reading from the N-terminus, the 386-residue chain is 2-isopropylmalate synthase (386 aa).

A Pyruvate carboxyltransferase domain is found at 12–265 (VRIFDTTLRD…DVGVRTYLLY (254 aa)). 4 residues coordinate a divalent metal cation: Asp21, His203, His205, and Asn239.

Belongs to the alpha-IPM synthase/homocitrate synthase family. As to quaternary structure, homodimer. Requires a divalent metal cation as cofactor.

The catalysed reaction is 3-methyl-2-oxobutanoate + acetyl-CoA + H2O = (2S)-2-isopropylmalate + CoA + H(+). It participates in amino-acid biosynthesis; L-leucine biosynthesis; L-leucine from 3-methyl-2-oxobutanoate: step 1/4. With respect to regulation, is not inhibited by leucine. Catalyzes the condensation of the acetyl group of acetyl-CoA with 3-methyl-2-oxobutanoate (2-oxoisovalerate) to form 3-carboxy-3-hydroxy-4-methylpentanoate (2-isopropylmalate). Carries out the first step of the leucine biosynthesis pathway. Also displays a low citramalate synthase activity, using pyruvate as substrate, but is unable to use 2-oxoglutarate. This is 2-isopropylmalate synthase from Sulfolobus acidocaldarius (strain ATCC 33909 / DSM 639 / JCM 8929 / NBRC 15157 / NCIMB 11770).